We begin with the raw amino-acid sequence, 494 residues long: Probable cytochrome P450 515A1 (494 aa).

Residues 1-21 (MILGIILGLFIYIYLINIKFF) traverse the membrane as a helical segment. Residue Cys-440 participates in heme binding.

It belongs to the cytochrome P450 family. It depends on heme as a cofactor.

It localises to the membrane. In Dictyostelium discoideum (Social amoeba), this protein is Probable cytochrome P450 515A1 (cyp515A1).